A 468-amino-acid chain; its full sequence is Argininosuccinate lyase (468 aa).

Belongs to the lyase 1 family. Argininosuccinate lyase subfamily.

The protein resides in the cytoplasm. It carries out the reaction 2-(N(omega)-L-arginino)succinate = fumarate + L-arginine. Its pathway is amino-acid biosynthesis; L-arginine biosynthesis; L-arginine from L-ornithine and carbamoyl phosphate: step 3/3. This chain is Argininosuccinate lyase, found in Paraburkholderia xenovorans (strain LB400).